The chain runs to 576 residues: Glucose-6-phosphate 1-dehydrogenase 1, chloroplastic (576 aa).

A chloroplast-targeting transit peptide spans 1-50 (MATHSMIIPSPSSSSSSLATAASPFKETLPLFSRSLTFPRKSLFSQVRLR). NADP(+)-binding positions include 97-104 (GASGDLAK) and arginine 131. Cysteine 149 and cysteine 157 are joined by a disulfide. Position 234 (lysine 234) interacts with NADP(+). D-glucose 6-phosphate is bound by residues lysine 234, 264–268 (HYLGK), glutamate 302, and aspartate 321. Histidine 326 (proton acceptor) is an active-site residue. Residue lysine 419 participates in NADP(+) binding. D-glucose 6-phosphate contacts are provided by lysine 422 and arginine 427. NADP(+) contacts are provided by arginine 432 and arginine 461. Glutamine 463 contacts D-glucose 6-phosphate. Residues 469–471 (YLR) and arginine 554 each bind NADP(+).

The protein belongs to the glucose-6-phosphate dehydrogenase family. In terms of assembly, forms homodimer. Interacts with G6PD2, G6PD3 and G6PD4. As to expression, expressed in leaves, stems, buds, flowers and siliques.

It is found in the plastid. It localises to the chloroplast stroma. The protein resides in the peroxisome. The catalysed reaction is D-glucose 6-phosphate + NADP(+) = 6-phospho-D-glucono-1,5-lactone + NADPH + H(+). It functions in the pathway carbohydrate degradation; pentose phosphate pathway; D-ribulose 5-phosphate from D-glucose 6-phosphate (oxidative stage): step 1/3. Its activity is regulated as follows. Regulated by metabolites. Post-translationally inactivated by cysteine-mediated redox modification via the ferredoxin-thioredoxin system in the light and this avoids futile cycles with photosynthetic CO2 fixation. Catalyzes the rate-limiting step of the oxidative pentose-phosphate pathway, which represents a route for the dissimilation of carbohydrates besides glycolysis. The main function of this enzyme is to provide reducing power (NADPH) and pentose phosphates for fatty acid and nucleic acid synthesis which are involved in membrane synthesis and cell division. In Arabidopsis thaliana (Mouse-ear cress), this protein is Glucose-6-phosphate 1-dehydrogenase 1, chloroplastic.